The chain runs to 429 residues: MNPLALQPISGSLHGTIKVPGDKSISHRSIIFGSIAKGTTTVTNFLDGEDCMRTIDAFKEMGVPIQKNGSNVTIEGTGLSGLMEPNKELDFGNSGTTTRLMLGLLAGLPFNTTVYGDASLSKRPMNRVVDPLRLMGATIDGKEQGNYLPLTITGTSLNSIDYDLPVKSAQVKSALLLAGLHSENTTIVREKSPTRNHTETMLQAFGANIKSDGHTTSISKTDDLQGCHVEVPGDISSAAFFVVAACMVPGSEVILKDVGLNETRTGIIDIVLQMGAKLTIQNERIVGGEKIGDILIISSPLTGVTIEGDAIPRLIDEIPILALLATQADGTTIIKDAEELKVKETDRLLAVSENLTQLGADVTPTEDGMIIRGNTKLKGGNFKSFDDHRIAMMGIIASLVTEDTVVVDNIDCINISYPNFVNDLQSILK.

3-phosphoshikimate is bound by residues Lys-23, Ser-24, and Arg-28. Lys-23 serves as a coordination point for phosphoenolpyruvate. The phosphoenolpyruvate site is built by Gly-95 and Arg-123. Residues Ser-168, Gln-170, Asp-316, and Lys-343 each coordinate 3-phosphoshikimate. Residue Gln-170 participates in phosphoenolpyruvate binding. Asp-316 functions as the Proton acceptor in the catalytic mechanism. Phosphoenolpyruvate-binding residues include Arg-347 and Arg-389.

This sequence belongs to the EPSP synthase family. In terms of assembly, monomer.

It localises to the cytoplasm. It catalyses the reaction 3-phosphoshikimate + phosphoenolpyruvate = 5-O-(1-carboxyvinyl)-3-phosphoshikimate + phosphate. The protein operates within metabolic intermediate biosynthesis; chorismate biosynthesis; chorismate from D-erythrose 4-phosphate and phosphoenolpyruvate: step 6/7. In terms of biological role, catalyzes the transfer of the enolpyruvyl moiety of phosphoenolpyruvate (PEP) to the 5-hydroxyl of shikimate-3-phosphate (S3P) to produce enolpyruvyl shikimate-3-phosphate and inorganic phosphate. This chain is 3-phosphoshikimate 1-carboxyvinyltransferase, found in Oceanobacillus iheyensis (strain DSM 14371 / CIP 107618 / JCM 11309 / KCTC 3954 / HTE831).